The sequence spans 223 residues: Uridylate kinase (223 aa).

An ATP-binding site is contributed by 9–10 (GS). Residue G42 coordinates UMP. ATP is bound by residues G43 and R47. UMP contacts are provided by residues D64 and 112–118 (VSPGQTT). 3 residues coordinate ATP: T138, Y144, and D147.

Belongs to the UMP kinase family. In terms of assembly, homohexamer.

Its subcellular location is the cytoplasm. It catalyses the reaction UMP + ATP = UDP + ADP. Its pathway is pyrimidine metabolism; CTP biosynthesis via de novo pathway; UDP from UMP (UMPK route): step 1/1. Inhibited by UTP. Catalyzes the reversible phosphorylation of UMP to UDP. The polypeptide is Uridylate kinase (Methanothrix thermoacetophila (strain DSM 6194 / JCM 14653 / NBRC 101360 / PT) (Methanosaeta thermophila)).